The primary structure comprises 134 residues: Small ribosomal subunit protein uS9 (134 aa).

The segment at 113-134 (REVERKKYGLKKARRAPQFSKR) is disordered. Positions 120 to 134 (YGLKKARRAPQFSKR) are enriched in basic residues.

The protein belongs to the universal ribosomal protein uS9 family.

The chain is Small ribosomal subunit protein uS9 (rpsI) from Thermotoga maritima (strain ATCC 43589 / DSM 3109 / JCM 10099 / NBRC 100826 / MSB8).